Here is a 388-residue protein sequence, read N- to C-terminus: Acetate kinase (388 aa).

Asn8 contacts Mg(2+). Lys15 contacts ATP. Arg88 is a substrate binding site. Asp144 (proton donor/acceptor) is an active-site residue. ATP-binding positions include 202–206 (HLGNG), 276–278 (DMR), and 321–325 (GVGEN). Position 375 (Glu375) interacts with Mg(2+).

The protein belongs to the acetokinase family. In terms of assembly, homodimer. Mg(2+) is required as a cofactor. It depends on Mn(2+) as a cofactor.

The protein localises to the cytoplasm. The catalysed reaction is acetate + ATP = acetyl phosphate + ADP. The protein operates within metabolic intermediate biosynthesis; acetyl-CoA biosynthesis; acetyl-CoA from acetate: step 1/2. In terms of biological role, catalyzes the formation of acetyl phosphate from acetate and ATP. Can also catalyze the reverse reaction. The polypeptide is Acetate kinase (Mycoplasmoides gallisepticum (strain R(low / passage 15 / clone 2)) (Mycoplasma gallisepticum)).